The following is a 3414-amino-acid chain: Hemocyanin 1 (3414 aa).

Positions 1–16 (MLSVRLLIVVLALANA) are cleaved as a signal peptide. Glu-17 provides a ligand contact to a divalent metal cation. The functional unit a (wall) stretch occupies residues 17-437 (ENLVRKSVEH…PPVKHHQSAN (421 aa)). His-58 contacts Cu cation. Cysteines 64 and 73 form a disulfide. The 2'-(S-cysteinyl)-histidine (Cys-His) cross-link spans 74 to 76 (CIH). The Cu cation site is built by His-76, His-85, His-195, His-199, and His-226. The cysteines at positions 185 and 252 are disulfide-linked. Residues 287–290 (CELH) constitute a cross-link (2'-(S-cysteinyl)-histidine (Cys-His)). Cysteines 339 and 351 form a disulfide. An N-linked (GlcNAc...) asparagine glycan is attached at Asn-403. The tract at residues 438–851 (LLVRKNINDL…RVKFDKVPRS (414 aa)) is functional unit b (wall). Residue His-478 participates in Cu cation binding. An intrachain disulfide couples Cys-484 to Cys-495. A cross-link (2'-(S-cysteinyl)-histidine (Cys-His)) is located at residues 496-498 (CVH). Cu cation-binding residues include His-498 and His-507. An N-linked (GlcNAc...) asparagine glycan is attached at Asn-545. An intrachain disulfide couples Cys-608 to Cys-674. Cu cation contacts are provided by His-618, His-622, and His-649. Residues 628–669 (SEHFSMSSLHYTAFDPLFYFHHSNVDRLWAVWQALQMRRHKP) form a WD 1 repeat. Glu-737 contributes to the a divalent metal cation binding site. The segment at 852-1271 (RLIRKNVDRL…EVYQAEVTSA (420 aa)) is functional unit c (wall). Residue His-892 participates in Cu cation binding. The cysteines at positions 898 and 909 are disulfide-linked. A cross-link (2'-(S-cysteinyl)-histidine (Cys-His)) is located at residues 910–912 (CVH). The Cu cation site is built by His-912, His-921, His-1031, His-1035, and His-1062. Intrachain disulfides connect Cys-1021/Cys-1088 and Cys-1178/Cys-1184. A WD 2 repeat occupies 1041–1082 (AQPYGMASLRYTAFDPLFYLHHSNTDRIWAIWQALQKYRGKP). Residues 1272–1680 (NRIRKNIENL…AHTDDGHTEP (409 aa)) are functional unit d (wall). Residue His-1309 coordinates Cu cation. Cysteines 1315 and 1324 form a disulfide. The 2'-(S-cysteinyl)-histidine (Cys-His) cross-link spans 1325–1327 (CVH). 5 residues coordinate Cu cation: His-1327, His-1336, His-1440, His-1444, and His-1471. 2 disulfide bridges follow: Cys-1430-Cys-1497 and Cys-1585-Cys-1595. The WD 3 repeat unit spans residues 1450-1491 (KGKYSMSNLDYAAFDPVFFLHHATTDRIWAIWQDLQRFRKRP). A glycan (N-linked (GlcNAc...) asparagine) is linked at Asn-1648. Positions 1681 to 2097 (VMIRKDITQL…HDISSHHLSL (417 aa)) are functional unit e (wall). Residue His-1721 coordinates Cu cation. Cys-1727 and Cys-1738 are joined by a disulfide. Positions 1739 to 1741 (CVH) form a cross-link, 2'-(S-cysteinyl)-histidine (Cys-His). Positions 1741, 1750, 1863, 1867, and 1894 each coordinate Cu cation. 2 disulfides stabilise this stretch: Cys-1853–Cys-1920 and Cys-2009–Cys-2015. Residues 1873–1914 (KEPYGIGHLHYASYDPLFYIHHSQTDRIWAIWQSLQRFRGLS) form a WD 4 repeat. The segment at 2098-2517 (NKVRHDLSTL…EDHHSSSMAG (420 aa)) is functional unit f (wall). Position 2138 (His-2138) interacts with Cu cation. Cys-2144 and Cys-2154 are oxidised to a cystine. Asn-2145 is a glycosylation site (N-linked (GlcNAc...) asparagine). Residues 2155-2157 (CIH) constitute a cross-link (2'-(S-cysteinyl)-histidine (Cys-His)). Residues His-2157, His-2166, His-2276, His-2280, and His-2307 each contribute to the Cu cation site. The stretch at 2163–2199 (PHWHRLYTLQFEQALRRHGSSVAVPYWDWTKPIHNIP) is one WD 5 repeat. Intrachain disulfides connect Cys-2266–Cys-2333 and Cys-2420–Cys-2426. An a divalent metal cation-binding site is contributed by Glu-2424. The functional unit g (internal arc) stretch occupies residues 2518–2921 (HGVRKEINTL…EKHHEDHHED (404 aa)). A Cu cation-binding site is contributed by His-2558. A disulfide bridge links Cys-2564 with Cys-2574. Residue Asn-2571 is glycosylated (N-linked (GlcNAc...) asparagine). The segment at residues 2575–2577 (CTH) is a cross-link (2'-(S-cysteinyl)-histidine (Cys-His)). Cu cation contacts are provided by His-2577, His-2586, His-2686, His-2690, and His-2717. Intrachain disulfides connect Cys-2676-Cys-2743 and Cys-2830-Cys-2836. The WD 6 repeat unit spans residues 2696 to 2737 (LTPYGMSTLEYTTYDPLFWLHHANTDRIWAIWQALQEYRGLP). The interval 2922-3414 (ILVRKNIHSL…LRIHVHVDDE (493 aa)) is functional unit h (internal slab). His-2962 provides a ligand contact to Cu cation. Cys-2968 and Cys-2978 form a disulfide bridge. Residues 2979–2981 (CVH) constitute a cross-link (2'-(S-cysteinyl)-histidine (Cys-His)). Cu cation is bound by residues His-2981, His-2990, His-3091, His-3095, and His-3122. A disulfide bridge links Cys-3081 with Cys-3148. The WD 7 repeat unit spans residues 3101–3142 (AEKYSMSTLEYSAFDPYFMIHHASLDKIWIIWQELQKRRVKP). An N-linked (GlcNAc...) asparagine glycan is attached at Asn-3278. Cys-3367 and Cys-3400 are disulfide-bonded.

The protein belongs to the tyrosinase family. Hemocyanin subfamily. Homo-didecamer, with two decamers assembled face-to-face at their open ends. This didecamer form a stable 25 nM cylinder wall. Probably N-glycosylated. Asn-1280 and Asn-2484 are buried deeply in the protein which make them inaccessible for sugar attachment. Asn-3278 N-glycan is likely to represent a diantennate carbohydrate tree. The didecamer is almost evenly tagged by a total of 120 sugar trees. As to expression, hemolymph.

The protein localises to the secreted. It localises to the extracellular space. In terms of biological role, hemocyanins are copper-containing oxygen carriers occurring freely dissolved in the hemolymph of many mollusks and arthropods. This is Hemocyanin 1 from Megathura crenulata (Giant keyhole limpet).